We begin with the raw amino-acid sequence, 140 residues long: Zinc finger SWIM domain-containing protein 7 (140 aa).

An SWIM-type zinc finger spans residues tyrosine 76–alanine 114.

This sequence belongs to the SWS1 family.

It is found in the nucleus. Involved in early stages of the homologous recombination repair (HRR) pathway of double-stranded DNA breaks arising during DNA replication or induced by DNA-damaging agents. This chain is Zinc finger SWIM domain-containing protein 7 (zswim7), found in Danio rerio (Zebrafish).